An 868-amino-acid chain; its full sequence is DNA mismatch repair protein MutS (868 aa).

Residue 620-627 (GPNMSGKS) coordinates ATP.

Belongs to the DNA mismatch repair MutS family.

Its function is as follows. This protein is involved in the repair of mismatches in DNA. It is possible that it carries out the mismatch recognition step. This protein has a weak ATPase activity. This Flavobacterium johnsoniae (strain ATCC 17061 / DSM 2064 / JCM 8514 / BCRC 14874 / CCUG 350202 / NBRC 14942 / NCIMB 11054 / UW101) (Cytophaga johnsonae) protein is DNA mismatch repair protein MutS.